The chain runs to 226 residues: Ribose-5-phosphate isomerase A (226 aa).

Residues 26–29, 82–85, and 95–98 each bind substrate; these read TGST, DGAD, and KGGG. The Proton acceptor role is filled by E104. K122 provides a ligand contact to substrate.

Belongs to the ribose 5-phosphate isomerase family. As to quaternary structure, homodimer.

The catalysed reaction is aldehydo-D-ribose 5-phosphate = D-ribulose 5-phosphate. It participates in carbohydrate degradation; pentose phosphate pathway; D-ribose 5-phosphate from D-ribulose 5-phosphate (non-oxidative stage): step 1/1. In terms of biological role, catalyzes the reversible conversion of ribose-5-phosphate to ribulose 5-phosphate. This Streptococcus uberis (strain ATCC BAA-854 / 0140J) protein is Ribose-5-phosphate isomerase A.